A 379-amino-acid chain; its full sequence is Inactive 2'-5'-oligoadenylate synthase 1B (379 aa).

Residues 1-355 (MEQELRSIPA…VPTEVDIPSQ (355 aa)) are Cytoplasmic-facing. Residues 356-374 (NYFFHIICLIFWLLLRLIF) form a helical; Anchor for type IV membrane protein membrane-spanning segment. The Extracellular portion of the chain corresponds to 375-379 (GKHSV).

The protein belongs to the 2-5A synthase family. In terms of assembly, interacts with OSBPL1A and ABCF3. As to expression, highly expressed in the brain, liver, spleen and heart.

The protein localises to the endoplasmic reticulum membrane. Its function is as follows. Does not have 2'-5'-OAS activity, but can bind double-stranded RNA. Displays antiviral activity against viruses via an alternative antiviral pathway independent of RNase L. This is Inactive 2'-5'-oligoadenylate synthase 1B (Oas1b) from Rattus norvegicus (Rat).